Consider the following 579-residue polypeptide: Membrane frizzled-related protein (579 aa).

Residues 1 to 69 are Cytoplasmic-facing; it reads MKDFSDVILC…RPDCRFSWLC (69 aa). The chain crosses the membrane as a helical; Signal-anchor for type II membrane protein span at residues 70-90; it reads VLLLSSLLLLLLGLLVAIILA. Topologically, residues 91 to 579 are extracellular; it reads QLQAAPPSGA…AADLEACAQP (489 aa). A disordered region spans residues 100–143; that stretch reads ASHSPLPAGGLTTTTTTPTITTSQAAGTPKGQQESGVSPSPQST. Residues 111–121 show a composition bias toward low complexity; sequence TTTTTTPTITT. The span at 122–143 shows a compositional bias: polar residues; the sequence is SQAAGTPKGQQESGVSPSPQST. Cystine bridges form between cysteine 144/cysteine 170 and cysteine 197/cysteine 216. Residues 144–253 enclose the CUB 1 domain; the sequence is CGGLLSGPRG…FGFHAWYQAM (110 aa). An N-linked (GlcNAc...) asparagine glycan is attached at asparagine 227. The LDL-receptor class A 1 domain occupies 259-295; sequence SCAHDEFRCDQLICLLPDSVCDGFANCADGSDETNCS. 5 disulfides stabilise this stretch: cysteine 260–cysteine 272, cysteine 267–cysteine 285, cysteine 279–cysteine 294, cysteine 301–cysteine 327, and cysteine 354–cysteine 377. The 114-residue stretch at 301-414 folds into the CUB 2 domain; it reads CGGNLTGLQG…GGFSATYLAF (114 aa). An N-linked (GlcNAc...) asparagine glycan is attached at asparagine 415. The LDL-receptor class A 2 domain maps to 420–455; it reads PCGPSELSCQAGGCKGVQWMCDMWRDCTDGSDDNCS. Disulfide bonds link cysteine 421–cysteine 433, cysteine 428–cysteine 446, cysteine 440–cysteine 454, cysteine 466–cysteine 528, cysteine 474–cysteine 521, cysteine 512–cysteine 549, cysteine 538–cysteine 576, and cysteine 542–cysteine 564. Residues 461-579 enclose the FZ domain; it reads PPELACEPVQ…AADLEACAQP (119 aa).

As to quaternary structure, interacts with C1QTNF5. As to expression, specifically expressed in brain. Strongly expressed in medulla oblongata and to a lower extent in hippocampus and corpus callosum. Expressed in keratinocytes.

Its subcellular location is the apical cell membrane. Functionally, may play a role in eye development. This is Membrane frizzled-related protein (MFRP) from Homo sapiens (Human).